Reading from the N-terminus, the 183-residue chain is Putative manganese efflux pump MntP 1 (183 aa).

The next 6 helical transmembrane spans lie at 6–26 (LFLL…CIGI), 36–56 (IIFV…GGYI), 64–84 (IVPI…ILMI), 100–120 (IMYL…GFTT), 130–150 (LFMS…LGII), and 158–178 (ISII…LFGL).

It belongs to the MntP (TC 9.B.29) family.

It localises to the cell membrane. Functionally, probably functions as a manganese efflux pump. The sequence is that of Putative manganese efflux pump MntP 1 from Clostridium botulinum (strain Langeland / NCTC 10281 / Type F).